Consider the following 141-residue polypeptide: Large ribosomal subunit protein uL11 (141 aa).

It belongs to the universal ribosomal protein uL11 family. As to quaternary structure, part of the ribosomal stalk of the 50S ribosomal subunit. Interacts with L10 and the large rRNA to form the base of the stalk. L10 forms an elongated spine to which L12 dimers bind in a sequential fashion forming a multimeric L10(L12)X complex. One or more lysine residues are methylated.

Forms part of the ribosomal stalk which helps the ribosome interact with GTP-bound translation factors. The protein is Large ribosomal subunit protein uL11 of Dinoroseobacter shibae (strain DSM 16493 / NCIMB 14021 / DFL 12).